The chain runs to 89 residues: MNLTLILFLIGILGFVLNRKNIILMLISIEIMLLAITFLILVSSLNIDDILGQTYAIYIIVVAGAESAIGLGILVAFYRLRGSVAIEYK.

The next 3 helical transmembrane spans lie at 1–21 (MNLTLILFLIGILGFVLNRKN), 22–42 (IILMLISIEIMLLAITFLILV), and 57–77 (IYIIVVAGAESAIGLGILVAF).

Belongs to the complex I subunit 4L family.

The protein localises to the mitochondrion membrane. It catalyses the reaction a ubiquinone + NADH + 5 H(+)(in) = a ubiquinol + NAD(+) + 4 H(+)(out). Its function is as follows. Core subunit of the mitochondrial membrane respiratory chain NADH dehydrogenase (Complex I) that is believed to belong to the minimal assembly required for catalysis. Complex I functions in the transfer of electrons from NADH to the respiratory chain. The immediate electron acceptor for the enzyme is believed to be ubiquinone. The chain is NADH-ubiquinone oxidoreductase chain 4L (ND4L) from Cryphonectria parasitica (Chestnut blight fungus).